The following is a 138-amino-acid chain: Basic phospholipase A2 BP-III (138 aa).

Residues Met-1 to Gly-16 form the signal peptide. 7 disulfides stabilise this stretch: Cys-42-Cys-132, Cys-44-Cys-60, Cys-59-Cys-112, Cys-65-Cys-138, Cys-66-Cys-105, Cys-73-Cys-98, and Cys-91-Cys-103. 2 residues coordinate Ca(2+): Gly-45 and Gly-47. His-63 is an active-site residue. Asp-106 is a catalytic residue.

Belongs to the phospholipase A2 family. Group II subfamily. K49 sub-subfamily. Ca(2+) is required as a cofactor. As to expression, expressed by the venom gland.

The protein localises to the secreted. It catalyses the reaction a 1,2-diacyl-sn-glycero-3-phosphocholine + H2O = a 1-acyl-sn-glycero-3-phosphocholine + a fatty acid + H(+). Its function is as follows. Snake venom phospholipase A2 (PLA2) that has low phospholipase A2 activity. Shows anticoagulant activities, strong myolytic activity, infiltration of polymorphonuclear cells, and edema in stromal tissues. Induces cell death of Jurkat cells in a concentration dependent manner. PLA2 catalyzes the calcium-dependent hydrolysis of the 2-acyl groups in 3-sn-phosphoglycerides. This is Basic phospholipase A2 BP-III from Protobothrops flavoviridis (Habu).